The following is a 516-amino-acid chain: Ribose import ATP-binding protein RbsA (516 aa).

ABC transporter domains follow at residues 14–250 (LRLT…VGRA) and 261–504 (AKGA…AGIG). ATP is bound at residue 46–53 (GENGAGKS).

It belongs to the ABC transporter superfamily. Ribose importer (TC 3.A.1.2.1) family. In terms of assembly, the complex is composed of an ATP-binding protein (RbsA), two transmembrane proteins (RbsC) and a solute-binding protein (RbsB).

The protein resides in the cell inner membrane. It catalyses the reaction D-ribose(out) + ATP + H2O = D-ribose(in) + ADP + phosphate + H(+). Its function is as follows. Part of the ABC transporter complex RbsABC involved in ribose import. Responsible for energy coupling to the transport system. This chain is Ribose import ATP-binding protein RbsA, found in Jannaschia sp. (strain CCS1).